The primary structure comprises 89 residues: Small ribosomal subunit protein uS15 (89 aa).

The protein belongs to the universal ribosomal protein uS15 family. Part of the 30S ribosomal subunit. Forms a bridge to the 50S subunit in the 70S ribosome, contacting the 23S rRNA.

One of the primary rRNA binding proteins, it binds directly to 16S rRNA where it helps nucleate assembly of the platform of the 30S subunit by binding and bridging several RNA helices of the 16S rRNA. Its function is as follows. Forms an intersubunit bridge (bridge B4) with the 23S rRNA of the 50S subunit in the ribosome. This is Small ribosomal subunit protein uS15 from Cupriavidus necator (strain ATCC 17699 / DSM 428 / KCTC 22496 / NCIMB 10442 / H16 / Stanier 337) (Ralstonia eutropha).